We begin with the raw amino-acid sequence, 237 residues long: Ras-related protein Rab-33A (237 aa).

8 residues coordinate GTP: asparagine 46, valine 47, glycine 48, lysine 49, threonine 50, cysteine 51, threonine 65, and threonine 68. Threonine 50 is a Mg(2+) binding site. Positions 59-71 match the Switch 1 motif; it reads GTFPDKTEATIGV. Residues threonine 68 and aspartate 91 each coordinate Mg(2+). The short motif at 92 to 111 is the Switch 2 element; the sequence is TAGQERFRKSMVEHYYRNVH. GTP contacts are provided by glycine 94, asparagine 151, lysine 152, aspartate 154, alanine 182, and lysine 183. 2 S-geranylgeranyl cysteine lipidation sites follow: cysteine 235 and cysteine 237. Residue cysteine 237 is modified to Cysteine methyl ester.

It belongs to the small GTPase superfamily. Rab family. Interacts with ATG16L1; the interaction is important for autophagosome formation. The cofactor is Mg(2+). Expressed predominantly in brain. Weak expression in ovary.

The protein localises to the cell membrane. The enzyme catalyses GTP + H2O = GDP + phosphate + H(+). Regulated by guanine nucleotide exchange factors (GEFs) which promote the exchange of bound GDP for free GTP. Regulated by GTPase activating proteins (GAPs) which increase the GTP hydrolysis activity. Inhibited by GDP dissociation inhibitors (GDIs). Its function is as follows. The small GTPases Rab are key regulators of intracellular membrane trafficking, from the formation of transport vesicles to their fusion with membranes. Rabs cycle between an inactive GDP-bound form and an active GTP-bound form that is able to recruit to membranes different sets of downstream effectors directly responsible for vesicle formation, movement, tethering and fusion. Modulates autophagosome formation through interaction with ATG16L1. The protein is Ras-related protein Rab-33A of Mus musculus (Mouse).